A 211-amino-acid chain; its full sequence is SAGA-associated factor 11 homolog 2 (211 aa).

The SGF11-type zinc-finger motif lies at 115–136; that stretch reads CTCPNCDRLVAAARFAPHLEKC. A disordered region spans residues 149–211; that stretch reads RRLATKEGSS…GSKKNNGKTF (63 aa). Residues 157-166 are compositionally biased toward low complexity; it reads SSASTSSTST. Ser-187 carries the phosphoserine modification. Low complexity predominate over residues 197–211; it reads SSRNNGSKKNNGKTF.

It belongs to the SGF11 family. As to quaternary structure, component of some SAGA transcription coactivator-HAT complexes, at least composed of Ada2b, not/nonstop, Pcaf/Gcn5, Sgf11 and Spt3. Within the SAGA complex, Sgf11, e(y)2, and not/nonstop form an additional subcomplex of SAGA called the DUB module (deubiquitination module). Interacts directly with not/nonstop. Interacts with the AMEX complex component xmas-2. Interacts with Cbp80; important for promoter recruitment of Sgf11 that is not associated with the DUB module.

It is found in the nucleus. Its subcellular location is the nucleoplasm. The protein resides in the cytoplasm. Functionally, component of the transcription regulatory histone acetylation (HAT) complex SAGA, a multiprotein complex that activates transcription by remodeling chromatin and mediating histone acetylation and deubiquitination. Within the SAGA complex, participates in a subcomplex that specifically deubiquitinates histone H2B. The SAGA complex is recruited to specific gene promoters by activators, where it is required for transcription. Required for nuclear receptor-mediated transactivation. Binds independently on SAGA to promoters in an RNA-dependent manner. Binds to mRNA and is essential for total mRNA export from the nucleus. Required to counteract heterochromatin silencing. Controls the development of neuronal connectivity in visual system by being required for accurate axon targeting in the optic lobe. Required for expression of ecdysone-induced genes such as br/broad. The chain is SAGA-associated factor 11 homolog 2 from Drosophila grimshawi (Hawaiian fruit fly).